The following is a 343-amino-acid chain: Anthranilate phosphoribosyltransferase (343 aa).

5-phospho-alpha-D-ribose 1-diphosphate-binding positions include Gly-81, 84–85, 91–94, 109–117, and Ser-121; these read GD, NVST, and KHGNRSVSS. Gly-81 provides a ligand contact to anthranilate. Mg(2+) is bound at residue Ser-93. Asn-112 is an anthranilate binding site. Anthranilate is bound at residue Arg-167. 2 residues coordinate Mg(2+): Asp-226 and Glu-227.

This sequence belongs to the anthranilate phosphoribosyltransferase family. In terms of assembly, homodimer. Mg(2+) serves as cofactor.

It carries out the reaction N-(5-phospho-beta-D-ribosyl)anthranilate + diphosphate = 5-phospho-alpha-D-ribose 1-diphosphate + anthranilate. The protein operates within amino-acid biosynthesis; L-tryptophan biosynthesis; L-tryptophan from chorismate: step 2/5. In terms of biological role, catalyzes the transfer of the phosphoribosyl group of 5-phosphorylribose-1-pyrophosphate (PRPP) to anthranilate to yield N-(5'-phosphoribosyl)-anthranilate (PRA). This is Anthranilate phosphoribosyltransferase from Chromohalobacter salexigens (strain ATCC BAA-138 / DSM 3043 / CIP 106854 / NCIMB 13768 / 1H11).